We begin with the raw amino-acid sequence, 315 residues long: Acetyl-coenzyme A carboxylase carboxyl transferase subunit alpha (315 aa).

Residues 36-289 (LSKKRLELME…RKAVAAELKI (254 aa)) enclose the CoA carboxyltransferase C-terminal domain.

The protein belongs to the AccA family. As to quaternary structure, acetyl-CoA carboxylase is a heterohexamer composed of biotin carboxyl carrier protein (AccB), biotin carboxylase (AccC) and two subunits each of ACCase subunit alpha (AccA) and ACCase subunit beta (AccD).

It is found in the cytoplasm. The catalysed reaction is N(6)-carboxybiotinyl-L-lysyl-[protein] + acetyl-CoA = N(6)-biotinyl-L-lysyl-[protein] + malonyl-CoA. The protein operates within lipid metabolism; malonyl-CoA biosynthesis; malonyl-CoA from acetyl-CoA: step 1/1. Its function is as follows. Component of the acetyl coenzyme A carboxylase (ACC) complex. First, biotin carboxylase catalyzes the carboxylation of biotin on its carrier protein (BCCP) and then the CO(2) group is transferred by the carboxyltransferase to acetyl-CoA to form malonyl-CoA. The protein is Acetyl-coenzyme A carboxylase carboxyl transferase subunit alpha of Francisella tularensis subsp. tularensis (strain FSC 198).